Reading from the N-terminus, the 338-residue chain is Nucleoid-associated protein VSAL_I1059 (338 aa).

The disordered stretch occupies residues 319-338; that stretch reads KGTPPNLKDQLTRRLGSSES.

Belongs to the YejK family.

It is found in the cytoplasm. It localises to the nucleoid. The sequence is that of Nucleoid-associated protein VSAL_I1059 from Aliivibrio salmonicida (strain LFI1238) (Vibrio salmonicida (strain LFI1238)).